The following is a 554-amino-acid chain: Arginine--tRNA ligase (554 aa).

The short motif at Ala129–His139 is the 'HIGH' region element.

Belongs to the class-I aminoacyl-tRNA synthetase family. As to quaternary structure, monomer.

The protein resides in the cytoplasm. The enzyme catalyses tRNA(Arg) + L-arginine + ATP = L-arginyl-tRNA(Arg) + AMP + diphosphate. This is Arginine--tRNA ligase from Syntrophotalea carbinolica (strain DSM 2380 / NBRC 103641 / GraBd1) (Pelobacter carbinolicus).